The sequence spans 232 residues: Lipoprotein-releasing system ATP-binding protein LolD 2 (232 aa).

In terms of domain architecture, ABC transporter spans 11 to 231 (VYLHDIKRQY…SLQDGVVVEL (221 aa)). ATP is bound at residue 47-54 (APSGSGKS).

The protein belongs to the ABC transporter superfamily. Lipoprotein translocase (TC 3.A.1.125) family. In terms of assembly, the complex is composed of two ATP-binding proteins (LolD) and two transmembrane proteins (LolC and LolE).

The protein resides in the cell inner membrane. Part of the ABC transporter complex LolCDE involved in the translocation of mature outer membrane-directed lipoproteins, from the inner membrane to the periplasmic chaperone, LolA. Responsible for the formation of the LolA-lipoprotein complex in an ATP-dependent manner. The protein is Lipoprotein-releasing system ATP-binding protein LolD 2 of Rhodopseudomonas palustris (strain ATCC BAA-98 / CGA009).